The chain runs to 927 residues: Transmembrane protein 132 homolog (927 aa).

The signal sequence occupies residues 1 to 18; it reads MLKKLWICISCIVTTALS. The chain crosses the membrane as a helical span at residues 749–769; sequence FHIFVLTIIGLIILFLFISFV. The segment at 789–842 is disordered; it reads LSSSSGSNSRQEETNEWVWLSQPQPPSSTISSGYSGNKSTAERQSSNGDDPSRT. The span at 817-842 shows a compositional bias: polar residues; the sequence is TISSGYSGNKSTAERQSSNGDDPSRT.

The protein belongs to the TMEM132 family. As to quaternary structure, interacts with gex-3. As to expression, specifically expressed in neurons.

The protein localises to the membrane. In terms of biological role, regulates neuronal morphology via inhibition of the WAVE regulatory complex (WCR), a complex that controls F-actin cytoskeletal dynamics. The sequence is that of Transmembrane protein 132 homolog from Caenorhabditis elegans.